Consider the following 330-residue polypeptide: ADP-L-glycero-D-manno-heptose-6-epimerase (330 aa).

NADP(+) is bound by residues 11–12, 32–33, Lys39, Lys54, 75–79, and Asn92; these read FI, DN, and EGACS. Tyr139 acts as the Proton acceptor in catalysis. Lys143 contributes to the NADP(+) binding site. Asn168 serves as a coordination point for substrate. NADP(+)-binding residues include Val169 and Lys177. The active-site Proton acceptor is the Lys177. Substrate contacts are provided by residues Arg179, His186, 200 to 203, Arg213, and Tyr292; that span reads FGEY.

This sequence belongs to the NAD(P)-dependent epimerase/dehydratase family. HldD subfamily. As to quaternary structure, homopentamer. It depends on NADP(+) as a cofactor.

The enzyme catalyses ADP-D-glycero-beta-D-manno-heptose = ADP-L-glycero-beta-D-manno-heptose. Its pathway is nucleotide-sugar biosynthesis; ADP-L-glycero-beta-D-manno-heptose biosynthesis; ADP-L-glycero-beta-D-manno-heptose from D-glycero-beta-D-manno-heptose 7-phosphate: step 4/4. Catalyzes the interconversion between ADP-D-glycero-beta-D-manno-heptose and ADP-L-glycero-beta-D-manno-heptose via an epimerization at carbon 6 of the heptose. The chain is ADP-L-glycero-D-manno-heptose-6-epimerase from Burkholderia mallei (strain NCTC 10247).